Consider the following 118-residue polypeptide: Holin-like protein CidA 2 (118 aa).

4 helical membrane-spanning segments follow: residues 5–27, 31–50, 62–84, and 88–110; these read MLLLQVGVLYVFSLVGTWIQGVF, MPGSLIGMLMLFLLLSTRIL, LLVFLPLFLIPSTTGLMEYESFL, and GSIIFLLVVISTVVTLIVSGYIS.

Belongs to the CidA/LrgA family. CidA subfamily.

The protein localises to the cell membrane. Its function is as follows. Increases the activity of extracellular murein hydrolases possibly by mediating their export via hole formation. Inhibited by the antiholin-like proteins LrgAB. In an unstressed cell, the LrgAB products probably inhibit the function of the CidA protein. When a cell is stressed by the addition of antibiotics or by other factors in the environment, CidA possibly oligomerizes within the bacterial cell membrane, creating lesions that disrupt the proton motive force, which in turn results in loss of cell viability. These lesions are also hypothesized to regulate the subsequent cell lysis by either allowing the murein hydrolases access to the cell wall substrate and/or regulating their activity by a possible change in the cell wall pH that results from loss of membrane potential. This chain is Holin-like protein CidA 2 (cidA2), found in Bacillus anthracis.